Here is a 154-residue protein sequence, read N- to C-terminus: Transcriptional repressor NrdR (154 aa).

A zinc finger lies at 3–34 (CPTCKYNGTRVVDSRPADDGNSIRRRRECEKC). One can recognise an ATP-cone domain in the interval 49–139 (LIVVKKDGAR…VYRQFKDISV (91 aa)).

It belongs to the NrdR family. Zn(2+) is required as a cofactor.

Its function is as follows. Negatively regulates transcription of bacterial ribonucleotide reductase nrd genes and operons by binding to NrdR-boxes. This is Transcriptional repressor NrdR from Listeria welshimeri serovar 6b (strain ATCC 35897 / DSM 20650 / CCUG 15529 / CIP 8149 / NCTC 11857 / SLCC 5334 / V8).